The following is a 754-amino-acid chain: Relaxin receptor 2 (754 aa).

Residues 1–416 (MIVFLVFKHL…SSFEDLLANN (416 aa)) are Extracellular-facing. The region spanning 44–81 (SCQKGYFPCGNLTKCLPRAFHCDGKDDCGNGADEENCG) is the LDL-receptor class A domain. 3 disulfides stabilise this stretch: Cys45-Cys58, Cys52-Cys71, and Cys65-Cys80. The N-linked (GlcNAc...) asparagine glycan is linked to Asn54. The N-linked (GlcNAc...) asparagine glycan is linked to Asn138. 10 LRR repeats span residues 138-159 (NVTL…VFIK), 162-183 (KLKK…AFFG), 186-207 (NLQI…IFKD), 210-231 (QLTW…LFTG), 234-255 (SLFF…MCAQ), 258-279 (QLNW…TFLS), 282-303 (SLTV…TFSS), 306-327 (NLGE…LFKD), 330-351 (LLQK…QFES), and 354-375 (QLQS…MFQP). Asn274 carries an N-linked (GlcNAc...) asparagine glycan. N-linked (GlcNAc...) asparagine glycosylation is present at Asn335. Asn378 is a glycosylation site (N-linked (GlcNAc...) asparagine). Residues 417 to 437 (ILRIFVWVIAFITCFGNLFVI) form a helical membrane-spanning segment. Topologically, residues 438–455 (GMRSFIKAENTTHAMSIK) are cytoplasmic. Residues 456-476 (ILCCADCLMGVYLFFVGIFDI) form a helical membrane-spanning segment. Over 477–495 (KYRGQYQKYALLWMESVQC) the chain is Extracellular. A disulfide bridge links Cys495 with Cys573. The helical transmembrane segment at 496–518 (RLMGFLAMLSTEVSVLLLTYLTL) threads the bilayer. Over 519-537 (EKFLVIVFPFSNIRPGKRQ) the chain is Cytoplasmic. The chain crosses the membrane as a helical span at residues 538 to 558 (TSVILICIWMAGFLIAVIPFW). Over 559-592 (NKDYFGNFYGKNGVCFPLYYDQTEDIGSKGYSLG) the chain is Extracellular. A helical membrane pass occupies residues 593-613 (IFLGVNLLAFLIIVFSYITMF). At 614–639 (CSIQKTALQTTEVRNCFGREVAVANR) the chain is on the cytoplasmic side. Residues 640-660 (FFFIVFSDAICWIPVFVVKIL) form a helical membrane-spanning segment. Residues 661–670 (SLFRVEIPDT) lie on the Extracellular side of the membrane. A helical membrane pass occupies residues 671-691 (MTSWIVIFFLPVNSALNPILY). The Cytoplasmic segment spans residues 692 to 754 (TLTTNFFKDK…LGDSIMKPVS (63 aa)).

It belongs to the G-protein coupled receptor 1 family. As to expression, expressed mainly in the brain, kidney, muscle, testis, thyroid, uterus, peripheral blood cells and bone marrow.

It localises to the cell membrane. In terms of biological role, receptor for relaxin. The activity of this receptor is mediated by G proteins leading to stimulation of adenylate cyclase and an increase of cAMP. May also be a receptor for Leydig insulin-like peptide (INSL3). The sequence is that of Relaxin receptor 2 (RXFP2) from Homo sapiens (Human).